We begin with the raw amino-acid sequence, 1254 residues long: DNA-directed RNA polymerase subunit beta (1254 aa).

This sequence belongs to the RNA polymerase beta chain family. As to quaternary structure, the RNAP catalytic core consists of 2 alpha, 1 beta, 1 beta' and 1 omega subunit. When a sigma factor is associated with the core the holoenzyme is formed, which can initiate transcription.

The catalysed reaction is RNA(n) + a ribonucleoside 5'-triphosphate = RNA(n+1) + diphosphate. DNA-dependent RNA polymerase catalyzes the transcription of DNA into RNA using the four ribonucleoside triphosphates as substrates. The polypeptide is DNA-directed RNA polymerase subunit beta (Protochlamydia amoebophila (strain UWE25)).